Reading from the N-terminus, the 305-residue chain is Glycine--tRNA ligase alpha subunit (305 aa).

This sequence belongs to the class-II aminoacyl-tRNA synthetase family. As to quaternary structure, tetramer of two alpha and two beta subunits.

The protein localises to the cytoplasm. The enzyme catalyses tRNA(Gly) + glycine + ATP = glycyl-tRNA(Gly) + AMP + diphosphate. This Streptococcus gordonii (strain Challis / ATCC 35105 / BCRC 15272 / CH1 / DL1 / V288) protein is Glycine--tRNA ligase alpha subunit.